Here is a 201-residue protein sequence, read N- to C-terminus: 3-isopropylmalate dehydratase small subunit (201 aa).

Belongs to the LeuD family. LeuD type 1 subfamily. In terms of assembly, heterodimer of LeuC and LeuD.

It catalyses the reaction (2R,3S)-3-isopropylmalate = (2S)-2-isopropylmalate. The protein operates within amino-acid biosynthesis; L-leucine biosynthesis; L-leucine from 3-methyl-2-oxobutanoate: step 2/4. In terms of biological role, catalyzes the isomerization between 2-isopropylmalate and 3-isopropylmalate, via the formation of 2-isopropylmaleate. The sequence is that of 3-isopropylmalate dehydratase small subunit from Kineococcus radiotolerans (strain ATCC BAA-149 / DSM 14245 / SRS30216).